A 417-amino-acid chain; its full sequence is NADH-quinone oxidoreductase subunit D (417 aa).

Belongs to the complex I 49 kDa subunit family. NDH-1 is composed of 14 different subunits. Subunits NuoB, C, D, E, F, and G constitute the peripheral sector of the complex.

It is found in the cell inner membrane. It catalyses the reaction a quinone + NADH + 5 H(+)(in) = a quinol + NAD(+) + 4 H(+)(out). Its function is as follows. NDH-1 shuttles electrons from NADH, via FMN and iron-sulfur (Fe-S) centers, to quinones in the respiratory chain. The immediate electron acceptor for the enzyme in this species is believed to be ubiquinone. Couples the redox reaction to proton translocation (for every two electrons transferred, four hydrogen ions are translocated across the cytoplasmic membrane), and thus conserves the redox energy in a proton gradient. The sequence is that of NADH-quinone oxidoreductase subunit D from Cupriavidus necator (strain ATCC 17699 / DSM 428 / KCTC 22496 / NCIMB 10442 / H16 / Stanier 337) (Ralstonia eutropha).